Reading from the N-terminus, the 677-residue chain is MLKENQSKWSSAGALIAIGIVFGDIGTSPLYTMNSILNSAKSAHNLDTFVIGSVSLVFWTLMLITTIKYVIIALQADNHGEGGIFALYSRVKKPNKKWLLLPALIGGAALLADGTLTPAVTVTTAIEGLKGQGIGEFIFPNNQTIVLFVVTVILLIVFTFQKAGTKKIGKIFGPVMLTWFLFIGFFGLVNIFSDLSILKALSPTYAIAVLFSPENKTGIFILGSVFLATTGAEALYSDMGHVGKHNIYVSWIFVYTMLILNYMGQGAWIMSHANQENLLMQSSNPFFEILPSGWRIFGVVMAALAAIIASQALISGAYTLVSEAINLKVIPRLRTFYPSEARGQMYIGTVNWLLCIIGLIIVWAFQTSHNMEAAYGLSITITMLMTTLLLYQFIKQEMKNKILAFFFVVIFGMIETVFLIASLGKFLHGGYATLIIMVAILSVMMIWFYGNKRREAISQQNDYLSLKDYRKQLINLSKDNEEPIFASNLVYIVNIHQNYMLKRNIIYSILGSKPKRAETYWFVTIRSSNDPYEKSYSVDMLGTNNIVHVTLNIGFKVEPQVNMYMKQIANNLVKQNIIKPQFPKYTLNKRGTVGEFKYIMANQNYEDLLNLPDIHTWDRFIISGRLWLQSHTVKPSSFYGLEVSDVLEETVPLFIKDSNKSKIKLIQNEVKNVIKPE.

12 consecutive transmembrane segments (helical) span residues 13-33, 54-74, 98-118, 137-157, 171-191, 217-237, 249-269, 296-316, 345-365, 374-394, 402-422, and 429-449; these read GALI…LYTM, VSLV…IIAL, WLLL…TLTP, FIFP…LLIV, IFGP…LVNI, TGIF…ALYS, VSWI…GAWI, IFGV…LISG, MYIG…VWAF, AYGL…YQFI, ILAF…LIAS, and GGYA…IWFY.

Belongs to the HAK/KUP transporter (TC 2.A.72) family.

It localises to the cell membrane. It catalyses the reaction K(+)(in) + H(+)(in) = K(+)(out) + H(+)(out). Transport of potassium into the cell. Likely operates as a K(+):H(+) symporter. The protein is Probable potassium transport system protein Kup of Leuconostoc mesenteroides subsp. mesenteroides (strain ATCC 8293 / DSM 20343 / BCRC 11652 / CCM 1803 / JCM 6124 / NCDO 523 / NBRC 100496 / NCIMB 8023 / NCTC 12954 / NRRL B-1118 / 37Y).